Consider the following 464-residue polypeptide: MKRKKTVLQQILSEKRKKVKEGDSMSGKDEFGTTKYVIYAEFEANGVVERPDVVGAIFGQTEGLLGDDLDLRELQKTGRIGRIRVEVHNKAGKTYGTITVPSSLDRVETAVLAAALETIDRVGPAEARIKVLRIEDVRATKRKYIIERAKEILETLMEQEIPETQEITEEVKKAVRAKELIEYGPEKLPAGPHVPFSDSIIVVEGRADVLNLLKHGIKNAIAVEGTSIPETIIKLSKERIVTAFTDGDRGGELILKELLQVADVDYVARAPEGKEVEELTKKEIVKALRSKVPAEQVINEMFNKGRSFYELIRERESEGERQPRQVTKPEPEVVKAQPKAETPEEKREPATVVRPSAEKIVKPIETSKSAPELEEFREFIERVKKDGIALLLDENKNVIAEIPVRELTNQLKERKDVYAVVFNGVITQRLIDTVSESGVKYIVGARKYNVVRRPVSLKIITFAE.

The Toprim domain maps to 198–272 (DSIIVVEGRA…DVDYVARAPE (75 aa)). Residues glutamate 204, aspartate 246, and aspartate 248 each contribute to the Mg(2+) site. Positions 315–333 (RESEGERQPRQVTKPEPEV) are enriched in basic and acidic residues. The disordered stretch occupies residues 315-351 (RESEGERQPRQVTKPEPEVVKAQPKAETPEEKREPAT).

This sequence belongs to the archaeal DnaG primase family. In terms of assembly, forms a ternary complex with MCM helicase and DNA. Component of the archaeal exosome complex. The cofactor is Mg(2+).

It carries out the reaction ssDNA + n NTP = ssDNA/pppN(pN)n-1 hybrid + (n-1) diphosphate.. Functionally, RNA polymerase that catalyzes the synthesis of short RNA molecules used as primers for DNA polymerase during DNA replication. Also part of the exosome, which is a complex involved in RNA degradation. Acts as a poly(A)-binding protein that enhances the interaction between heteromeric, adenine-rich transcripts and the exosome. The sequence is that of DNA primase DnaG from Thermococcus kodakarensis (strain ATCC BAA-918 / JCM 12380 / KOD1) (Pyrococcus kodakaraensis (strain KOD1)).